A 156-amino-acid chain; its full sequence is Small ribosomal subunit protein uS7 (156 aa).

It belongs to the universal ribosomal protein uS7 family. In terms of assembly, part of the 30S ribosomal subunit. Contacts proteins S9 and S11.

One of the primary rRNA binding proteins, it binds directly to 16S rRNA where it nucleates assembly of the head domain of the 30S subunit. Is located at the subunit interface close to the decoding center, probably blocks exit of the E-site tRNA. The sequence is that of Small ribosomal subunit protein uS7 from Citrobacter koseri (strain ATCC BAA-895 / CDC 4225-83 / SGSC4696).